The sequence spans 163 residues: 5-hydroxymethyl-dUMP N-hydrolase (163 aa).

Residue alanine 2 is modified to N-acetylalanine. Glycine 16 lines the 5-hydroxymethyl-dUMP pocket. Residue serine 17 is modified to Phosphoserine. 5-hydroxymethyl-dUMP is bound by residues isoleucine 18, arginine 19, glycine 20, serine 87, glycine 89, and glutamate 93. Serine 87 is modified (phosphoserine). A phosphoserine mark is found at serine 112, serine 117, serine 127, and serine 158. Serine 117 serves as a coordination point for 5-hydroxymethyl-dUMP.

Monomer and homodimer. Highly expressed in heart, kidney, liver and spleen. Weakly expressed in lung and skeletal muscle.

Its subcellular location is the cytoplasm. The protein localises to the nucleus. It catalyses the reaction 5-hydroxymethyl-dUMP + H2O = 5-hydroxymethyluracil + 2-deoxy-D-ribose 5-phosphate. In terms of biological role, part of a nucleotide salvage pathway that eliminates epigenetically modified 5-hydroxymethyl-dCMP (hmdCMP) in a two-step process entailing deamination to cytotoxic 5-hydroxymethyl-dUMP (hmdUMP), followed by its hydrolysis into 5-hydroxymethyluracil (hmU) and 2-deoxy-D-ribose 5-phosphate (deoxyribosephosphate). Catalyzes the second step in that pathway, the hydrolysis of the N-glycosidic bond in hmdUMP, degrading this cytotoxic nucleotide to avoid its genomic integration. In Rattus norvegicus (Rat), this protein is 5-hydroxymethyl-dUMP N-hydrolase.